Reading from the N-terminus, the 150-residue chain is UPF0756 membrane protein NTHI1233 (150 aa).

A run of 4 helical transmembrane segments spans residues 1 to 21 (MTLQLNTIALLLVILLILGVL), 52 to 72 (YGVKIGIIILTIGVLSPLVSG), 81 to 101 (GFLSWKMALSIAVGVLVAWLA), and 123 to 143 (IIGVAFLGGIPVGPLIAAGIL).

Belongs to the UPF0756 family.

It localises to the cell membrane. The polypeptide is UPF0756 membrane protein NTHI1233 (Haemophilus influenzae (strain 86-028NP)).